Reading from the N-terminus, the 1522-residue chain is MSVRLPQSIDRLSSLSSLGDSAPERKSPSHHRQPSDASETTGLVQRCVIIQKDQHGFGFTVSGDRIVLVQSVRPGGAAMKAGVKEGDRIIKVNGTMVTNSSHLEVVKLIKSGAYVALTLLGSSPSSMGISGLQQDPSPAGAPRITSVIPSPPPPPPLPPPQRITGPKPLQDPEVQKHATQILRNMLRQEEKELQDILPLYGDTSQRPSEGRLSLDSQEGDSGLDSGTERFPSLSESLMNRNSVLSDPGLDSPRTSPVIMARVAQHHRRQGSDAAVPSTGDQGVDQSPKPLIIGPEEDYDPGYFNNESDIIFQDLEKLKSRPAHLGVFLRYIFSQADPSPLLFYLCAEVYQQASPKDSRSLGKDIWNIFLEKNAPLRVKIPEMLQAEIDSRLRNSEDARGVLCEAQEAAMPEIQEQIHDYRTKRTLGLGSLYGENDLLDLDGDPLRERQVAEKQLAALGDILSKYEEDRSAPMDFALNTYMSHAGIRLREARPSNTAEKAQSAPDKDKWLPFFPKTKKSSNSKKEKDALEDKKRNPILKYIGKPKSSSQSTFHIPLSPVEVKPGNVRNIIQHFENNQQYDAPEPGTQRLSTGSFPEDLLESDSSRSEIRLGRSESLKGREEMKRSRKAENVPRSRSDVDMDAAAEATRLHQSASSSTSSLSTRSLENPTPPFTPKMGRRSIESPSLGFCTDTLLPHLLEDDLGQLSDLEPEPDAQNWQHTVGKDVVAGLTQREIDRQEVINELFVTEASHLRTLRVLDLIFYQRMKKENLMPREELARLFPNLPELIEIHNSWCEAMKKLREEGPIIKEISDLMLARFDGPAREELQQVAAQFCSYQSIALELIKTKQRKESRFQLFMQEAESHPQCRRLQLRDLIISEMQRLTKYPLLLESIIKHTEGGTSEHEKLCRARDQCREILKYVNEAVKQTENRHRLEGYQKRLDATALERASNPLAAEFKSLDLTTRKMIHEGPLTWRISKDKTLDLHVLLLEDLLVLLQKQDEKLLLKCHSKTAVGSSDSKQTFSPVLKLNAVLIRSVATDKRAFFIICTSKLGPPQIYELVALTSSDKNTWMELLEEAVRNATRHPGAAPMPVHPPPPGPREPAQQGPTPSRVELDDSDVFHGEPEPEELPGGTGSQQRVQGKHQVLLEDPEQEGSAEEEELGVLPCPSTSLDGENRGIRTRNPIHLAFPGPLFMEGLADSALEDVENLRHLILWSLLPGHTMETQAAQEPEDDLTPTPSVISVTSHPWDPGSPGQAPPGGEGDNTQLAGLEGERPEQEDMGLCSLEHLPPRTRNSGIWESPELDRNLAEDASSTEAAGGYKVVRKAEVAGSKVVPALPESGQSEPGPPEVEGGTKATGNCFYVSMPSGPPDSSTDHSEAPMSPPQPDSLPAGQTEPQPQLQGGNDDPRRPSRSPPSLALRDVGMIFHTIEQLTLKLNRLKDMELAHRELLKSLGGESSGGTTPVGSFHTEAARWTDGSLSPPAKEPLASDSRNSHELGPCPEDGSDAPLEDSTADAAASPGP.

Residues 1-40 (MSVRLPQSIDRLSSLSSLGDSAPERKSPSHHRQPSDASET) form a disordered region. S2, S14, S16, and S35 each carry phosphoserine. Residues 47–126 (CVIIQKDQHG…LTLLGSSPSS (80 aa)) enclose the PDZ domain. 2 disordered regions span residues 128-175 (GISG…PEVQ) and 200-231 (YGDTSQRPSEGRLSLDSQEGDSGLDSGTERFP). Pro residues predominate over residues 149–161 (PSPPPPPPLPPPQ). A phosphoserine mark is found at S245 and S251. Residue T254 is modified to Phosphothreonine. S255 and S271 each carry phosphoserine. The interval 263–286 (AQHHRRQGSDAAVPSTGDQGVDQS) is disordered. One can recognise an RGSL domain in the interval 306-486 (ESDIIFQDLE…NTYMSHAGIR (181 aa)). Residues 444–470 (LRERQVAEKQLAALGDILSKYEEDRSA) adopt a coiled-coil conformation. Residues 490-555 (ARPSNTAEKA…SSQSTFHIPL (66 aa)) form a disordered region. Residues 521–533 (SKKEKDALEDKKR) are compositionally biased toward basic and acidic residues. S556, S635, and S663 each carry phosphoserine. The segment at 573-680 (ENNQQYDAPE…FTPKMGRRSI (108 aa)) is disordered. Over residues 601–637 (DSSRSEIRLGRSESLKGREEMKRSRKAENVPRSRSDV) the composition is skewed to basic and acidic residues. Low complexity predominate over residues 651–664 (SASSSTSSLSTRSL). T668 and T672 each carry phosphothreonine. Residues 734-923 (DRQEVINELF…REILKYVNEA (190 aa)) enclose the DH domain. Residues 965 to 1079 (KMIHEGPLTW…WMELLEEAVR (115 aa)) form the PH domain. A disordered region spans residues 1084-1141 (HPGAAPMPVHPPPPGPREPAQQGPTPSRVELDDSDVFHGEPEPEELPGGTGSQQRVQG). Pro residues predominate over residues 1091–1100 (PVHPPPPGPR). Positions 1112–1124 (VELDDSDVFHGEP) are enriched in basic and acidic residues. At S1155 the chain carries Phosphoserine. Disordered regions lie at residues 1223 to 1320 (ETQA…AGGY), 1332 to 1423 (KVVP…RDVG), and 1453 to 1522 (LGGE…SPGP). A compositionally biased stretch (polar residues) spans 1236–1245 (PTPSVISVTS). S1295 and S1300 each carry phosphoserine. Residues 1338 to 1353 (PESGQSEPGPPEVEGG) are compositionally biased toward low complexity. Phosphoserine occurs at positions 1457 and 1458. Phosphothreonine is present on residues T1462 and T1475. Position 1480 is a phosphoserine (S1480). Acidic residues predominate over residues 1503–1513 (DGSDAPLEDST).

Interacts with GNA12 and GNA13 through the RGS domain. Interacts with RHOA, PLXNB1 and PLXNB2. Interacts with SLC1A6. Interacts (via DH domain) with GCSAM (via C-terminus). Found in a complex with ARHGEF11 and ARHGEF12; binding to ARHGEF11 and ARHGEF12 enhances CDC42 GEF activity of PLEKHG4B, and PLEKHG4B, in turn, inhibits ARHGEF11- and ARHGEF12-mediated RHOA activation. Phosphorylated by MAP kinase p38 (MAPK11, MAPK12, MAPK13 and/or MAPK14). In terms of processing, ubiquitinated by the BCR(KLHL20) E3 ubiquitin ligase complex when previously phosphorylated by MAP kinase p38 (MAPK11, MAPK12, MAPK13 and/or MAPK14), leading to its degradation, thereby restricting RhoA activity and facilitating growth cone spreading and neurite outgrowth. In terms of tissue distribution, ubiquitously expressed.

It localises to the cytoplasm. The protein localises to the membrane. May play a role in the regulation of RhoA GTPase by guanine nucleotide-binding alpha-12 (GNA12) and alpha-13 (GNA13). Acts as guanine nucleotide exchange factor (GEF) for RhoA GTPase and may act as GTPase-activating protein (GAP) for GNA12 and GNA13. Involved in neurotrophin-induced neurite outgrowth. The chain is Rho guanine nucleotide exchange factor 11 (ARHGEF11) from Homo sapiens (Human).